The primary structure comprises 251 residues: Hydroxyacylglutathione hydrolase (251 aa).

Zn(2+) is bound by residues H59, H61, D63, H64, H118, D141, and H179.

Belongs to the metallo-beta-lactamase superfamily. Glyoxalase II family. As to quaternary structure, monomer. It depends on Zn(2+) as a cofactor.

It catalyses the reaction an S-(2-hydroxyacyl)glutathione + H2O = a 2-hydroxy carboxylate + glutathione + H(+). Its pathway is secondary metabolite metabolism; methylglyoxal degradation; (R)-lactate from methylglyoxal: step 2/2. Its function is as follows. Thiolesterase that catalyzes the hydrolysis of S-D-lactoyl-glutathione to form glutathione and D-lactic acid. The polypeptide is Hydroxyacylglutathione hydrolase (Prochlorococcus marinus (strain NATL2A)).